Reading from the N-terminus, the 370-residue chain is MKQKFVLPITPPSTAEKKPQTENRCNENLKPRRLLPQLKKSVRNRKPRLSYRPELNSVFDLDAYVDSTHLSKSQRHHMDRDAGFISYALNYSKRMVVVSGAGISVAAGIPDFRSSEGIFSTVNGGSGKDLFDYNRVYGDESMSLKFNQLMVSLFRLSKNCQPTKFHEMLNEFARDGRLLRLYTQNIDGLDTQLPHLSTNVPLAKPIPSTVQLHGSIKHMECNKCLNIKPFDPELFKCDDKFDSRTEIIPSCPQCEEYETVRKMAGLRSTGVGKLRPRVILYNEVHPEGDFIGEIANNDLKKRIDCLIIVGTSLKIPGVKNICRQFAAKVHANRGIVLYLNTSMPPKNVLDSLKFVDLVVLGDCQHVTSLL.

The interval 1–27 (MKQKFVLPITPPSTAEKKPQTENRCNE) is disordered. Residues 15-27 (AEKKPQTENRCNE) are compositionally biased toward basic and acidic residues. A Deacetylase sirtuin-type domain is found at 75-370 (RHHMDRDAGF…GDCQHVTSLL (296 aa)). NAD(+) contacts are provided by residues 100–119 (GAGISVAAGIPDFRSSEGIF) and 184–187 (QNID). His-213 serves as the catalytic Proton acceptor. Cys-221, Cys-224, Cys-251, and Cys-254 together coordinate Zn(2+). Residues 310-312 (GTS), 340-342 (NTS), and Cys-363 contribute to the NAD(+) site.

It belongs to the sirtuin family. Class I subfamily. Zn(2+) is required as a cofactor.

Its subcellular location is the nucleus. The enzyme catalyses N(6)-acetyl-L-lysyl-[protein] + NAD(+) + H2O = 2''-O-acetyl-ADP-D-ribose + nicotinamide + L-lysyl-[protein]. Its function is as follows. NAD-dependent histone deacetylase, which contributes together with HST3 to histone H3 'Lys-56' deacetylation, regulation of telomeric silencing, proper cell cycle progression, DNA damage control, DNA recombination, and genomic maintenance. This is NAD-dependent histone deacetylase HST4 (HST4) from Saccharomyces cerevisiae (strain ATCC 204508 / S288c) (Baker's yeast).